Reading from the N-terminus, the 253-residue chain is DNA repair protein RecO (253 aa).

The protein belongs to the RecO family.

Involved in DNA repair and RecF pathway recombination. This chain is DNA repair protein RecO, found in Dehalococcoides mccartyi (strain ATCC BAA-2266 / KCTC 15142 / 195) (Dehalococcoides ethenogenes (strain 195)).